A 231-amino-acid polypeptide reads, in one-letter code: MTKTGYINAAFRSSQNNEAYLFINDKYVLLDYAPGTSNDKVLYGPTPVRDGFKSLNQTVFGSYGVDCSFDTDNDEAFIFYEKFCALIDYAPHSNKDKIILGPKKIADMFPFFEGTVFENGIDAAYRSTRGKEVYLFKGDQYARIDYETNSMVNKEIKSIRNGFPCFRNTIFESGTDAAFASHKTNEVYFFKGDYYARVTVTPGATDDQIMDGVRKTLDYWPSLRGIIPLEN.

Hemopexin repeat units follow at residues 4-55 (TGYI…FKSL), 62-112 (SYGV…FPFF), 118-166 (ENGI…FPCF), and 172-223 (ESGT…WPSL). Positions 8, 66, 122, and 176 each coordinate Ca(2+).

As to quaternary structure, monomer and homodimer.

The protein resides in the cytoplasm. It localises to the cytosol. In terms of biological role, may play a role in response to oxidative stress and polyamine biosynthesis. This Pisum sativum (Garden pea) protein is Albumin-2.